Here is a 106-residue protein sequence, read N- to C-terminus: Pyrimidine/purine nucleoside phosphorylase (106 aa).

This sequence belongs to the nucleoside phosphorylase PpnP family.

It catalyses the reaction a purine D-ribonucleoside + phosphate = a purine nucleobase + alpha-D-ribose 1-phosphate. It carries out the reaction adenosine + phosphate = alpha-D-ribose 1-phosphate + adenine. The catalysed reaction is cytidine + phosphate = cytosine + alpha-D-ribose 1-phosphate. The enzyme catalyses guanosine + phosphate = alpha-D-ribose 1-phosphate + guanine. It catalyses the reaction inosine + phosphate = alpha-D-ribose 1-phosphate + hypoxanthine. It carries out the reaction thymidine + phosphate = 2-deoxy-alpha-D-ribose 1-phosphate + thymine. The catalysed reaction is uridine + phosphate = alpha-D-ribose 1-phosphate + uracil. The enzyme catalyses xanthosine + phosphate = alpha-D-ribose 1-phosphate + xanthine. Its function is as follows. Catalyzes the phosphorolysis of diverse nucleosides, yielding D-ribose 1-phosphate and the respective free bases. Can use uridine, adenosine, guanosine, cytidine, thymidine, inosine and xanthosine as substrates. Also catalyzes the reverse reactions. This Burkholderia ambifaria (strain ATCC BAA-244 / DSM 16087 / CCUG 44356 / LMG 19182 / AMMD) (Burkholderia cepacia (strain AMMD)) protein is Pyrimidine/purine nucleoside phosphorylase.